The primary structure comprises 156 residues: Ribonuclease pancreatic (156 aa).

The first 26 residues, 1 to 26 (MGLEKSLVFFPLLVLLALGWVQPCLG), serve as a signal peptide directing secretion. Substrate is bound by residues K33 and R36. H38 functions as the Proton acceptor in the catalytic mechanism. Intrachain disulfides connect C54–C112, C68–C123, C86–C138, and C93–C100. Residue 69 to 73 (KPVNT) coordinates substrate. An N-linked (GlcNAc...) asparagine glycan is attached at N90. Residues K94 and R113 each contribute to the substrate site. Catalysis depends on H147, which acts as the Proton donor.

It belongs to the pancreatic ribonuclease family. As to quaternary structure, monomer. Interacts with and forms tight 1:1 complexes with RNH1. Dimerization of two such complexes may occur. Interaction with RNH1 inhibits this protein. As to expression, pancreas.

It is found in the secreted. The catalysed reaction is an [RNA] containing cytidine + H2O = an [RNA]-3'-cytidine-3'-phosphate + a 5'-hydroxy-ribonucleotide-3'-[RNA].. It carries out the reaction an [RNA] containing uridine + H2O = an [RNA]-3'-uridine-3'-phosphate + a 5'-hydroxy-ribonucleotide-3'-[RNA].. In terms of biological role, endonuclease that catalyzes the cleavage of RNA on the 3' side of pyrimidine nucleotides. Acts on single-stranded and double-stranded RNA. The protein is Ribonuclease pancreatic (RNASE1) of Glis glis (Fat dormouse).